Reading from the N-terminus, the 448-residue chain is Phosphoglucosamine mutase (448 aa).

Serine 100 (phosphoserine intermediate) is an active-site residue. Residues serine 100, aspartate 240, aspartate 242, and aspartate 244 each contribute to the Mg(2+) site. A Phosphoserine modification is found at serine 100.

It belongs to the phosphohexose mutase family. It depends on Mg(2+) as a cofactor. In terms of processing, activated by phosphorylation.

The enzyme catalyses alpha-D-glucosamine 1-phosphate = D-glucosamine 6-phosphate. In terms of biological role, catalyzes the conversion of glucosamine-6-phosphate to glucosamine-1-phosphate. The protein is Phosphoglucosamine mutase of Bacillus cereus (strain ATCC 10987 / NRS 248).